The following is a 1978-amino-acid chain: Sodium channel protein type 8 subunit alpha (1978 aa).

2 disordered regions span residues 1–20 and 28–62; these read MAARLLAPPGPDSFKPFTPE and RIAESKLKKPPKADGSHREDDEDSKPKPNSDLEAG. The Cytoplasmic portion of the chain corresponds to 1–132; sequence MAARLLAPPG…RIAIKILIHS (132 aa). Residues 28–61 are compositionally biased toward basic and acidic residues; sequence RIAESKLKKPPKADGSHREDDEDSKPKPNSDLEA. The I repeat unit spans residues 114–442; it reads ILSPFNLIRR…KAMLEQLKKQ (329 aa). Residues 133 to 151 form a helical membrane-spanning segment; sequence VFSMIIMCTILTNCVFMTF. Over 152–158 the chain is Extracellular; the sequence is SNPPEWS. Residues 159–179 traverse the membrane as a helical segment; sequence KNVEYTFTGIYTFESLVKIIA. The Cytoplasmic portion of the chain corresponds to 180–193; it reads RGFCIDGFTFLRDP. A helical membrane pass occupies residues 194–211; the sequence is WNWLDFSVIMMAYVTEFV. Over 212 to 217 the chain is Extracellular; sequence DLGNVS. Asn-215 is a glycosylation site (N-linked (GlcNAc...) asparagine). A helical membrane pass occupies residues 218–234; it reads ALRTFRVLRALKTISVI. The Cytoplasmic portion of the chain corresponds to 235–253; sequence PGLKTIVGALIQSVKKLSD. A helical transmembrane segment spans residues 254-273; that stretch reads VMILTVFCLSVFALIGLQLF. The Extracellular segment spans residues 274–355; sequence MGNLRNKCVV…PNYGYTSFDT (82 aa). A disulfide bridge links Cys-281 with Cys-333. 4 N-linked (GlcNAc...) asparagine glycosylation sites follow: Asn-289, Asn-295, Asn-308, and Asn-326. The pore-forming intramembrane region spans 356-380; sequence FSWAFLALFRLMTQDYWENLYQLTL. Residue Glu-373 participates in Na(+) binding. Residues 381 to 387 are Extracellular-facing; it reads RAAGKTY. Residues 388–408 form a helical membrane-spanning segment; that stretch reads MIFFVLVIFVGSFYLVNLILA. Residues 409–751 are Cytoplasmic-facing; it reads VVAMAYEEQN…EIVNLIVMDP (343 aa). Disordered stretches follow at residues 446–530 and 576–597; these read AQAA…KAFR and DPGSENEFADDEHSTVEESEGR. Positions 473-486 are enriched in low complexity; that stretch reads SPRSSSELSKLSSK. Basic residues predominate over residues 489 to 500; sequence KERRNRRKKRKQ. Basic and acidic residues-rich tracts occupy residues 501–530 and 586–597; these read KELSEGEEKGDPEKVFKSESEDGMRRKAFR and DEHSTVEESEGR. A phosphoserine mark is found at Ser-518 and Ser-520. Residues 733–1005 form an II repeat; the sequence is CHPYWIKLKE…QISVIRIKKG (273 aa). The helical transmembrane segment at 752 to 770 threads the bilayer; that stretch reads FVDLAITICIVLNTLFMAM. Residues 771–781 are Extracellular-facing; sequence EHHPMTPQFEH. A helical transmembrane segment spans residues 782–801; it reads VLAVGNLVFTGIFTAEMFLK. The Cytoplasmic segment spans residues 802 to 815; sequence LIAMDPYYYFQEGW. The chain crosses the membrane as a helical span at residues 816–835; the sequence is NIFDGFIVSLSLMELSLADV. Over 836 to 837 the chain is Extracellular; sequence EG. The chain crosses the membrane as a helical span at residues 838–855; sequence LSVLRSFRLLRVFKLAKS. Residues 856 to 871 are Cytoplasmic-facing; that stretch reads WPTLNMLIKIIGNSVG. Residues 872–890 form a helical membrane-spanning segment; it reads ALGNLTLVLAIIVFIFAVV. Residues 891–919 are Extracellular-facing; the sequence is GMQLFGKSYKECVCKINQECKLPRWHMND. An intrachain disulfide couples Cys-904 to Cys-910. The pore-forming intramembrane region spans 920–940; that stretch reads FFHSFLIVFRVLCGEWIETMW. Positions 934 and 937 each coordinate Na(+). Residues 941 to 953 lie on the Extracellular side of the membrane; sequence DCMEVAGQAMCLI. Cys-942 and Cys-951 are joined by a disulfide. The helical transmembrane segment at 954–974 threads the bilayer; it reads VFMMVMVIGNLVVLNLFLALL. The Cytoplasmic segment spans residues 975–1197; that stretch reads LSSFSADNLA…TCFLIVEHNW (223 aa). The tract at residues 1105–1146 is disordered; sequence NLNTEDVSSESDPEGSKDKLDDTSSSEGSTIDIKPEVEEVPV. An III repeat occupies 1178-1493; the sequence is LGKSWWILRK…KKYYNAMKKL (316 aa). A helical transmembrane segment spans residues 1198-1215; sequence FETFIIFMILLSSGALAF. Topologically, residues 1216-1228 are extracellular; the sequence is EDIYIEQRKTIRT. Residues 1229–1247 form a helical membrane-spanning segment; it reads ILEYADKVFTYIFILEMLL. Residues 1248 to 1261 lie on the Cytoplasmic side of the membrane; sequence KWTAYGFVKFFTNA. Residues 1262 to 1280 form a helical membrane-spanning segment; the sequence is WCWLDFLIVAVSLVSLIAN. The Extracellular segment spans residues 1281 to 1288; that stretch reads ALGYSELG. The chain crosses the membrane as a helical span at residues 1289–1307; that stretch reads AIKSLRTLRALRPLRALSR. Residues 1308-1324 lie on the Cytoplasmic side of the membrane; the sequence is FEGMRVVVNALVGAIPS. The chain crosses the membrane as a helical span at residues 1325–1344; that stretch reads IMNVLLVCLIFWLIFSIMGV. The Extracellular portion of the chain corresponds to 1345–1397; that stretch reads NLFAGKYHYCFNETSEIRFEIDIVNNKTDCEKLMEGNSTEIRWKNVKINFDNV. An intrachain disulfide couples Cys-1354 to Cys-1374. 3 N-linked (GlcNAc...) asparagine glycosylation sites follow: Asn-1356, Asn-1370, and Asn-1381. The segment at residues 1398-1419 is an intramembrane region (pore-forming); that stretch reads GAGYLALLQVATFKGWMDIMYA. Topologically, residues 1420-1436 are extracellular; that stretch reads AVDSRKPDEQPDYEGNI. The chain crosses the membrane as a helical span at residues 1437 to 1458; the sequence is YMYIYFVIFIIFGSFFTLNLFI. Topologically, residues 1459–1521 are cytoplasmic; it reads GVIIDNFNQQ…IVFDFVTQQA (63 aa). Ser-1495 is modified (phosphoserine; by PKC). The IV repeat unit spans residues 1502–1799; the sequence is IPRPLNKIQG…WEKFDPDATQ (298 aa). The chain crosses the membrane as a helical span at residues 1522–1539; sequence FDIVIMMLICLNMVTMMV. Topologically, residues 1540–1550 are extracellular; the sequence is ETDTQSKQMEN. A helical transmembrane segment spans residues 1551–1569; it reads ILYWINLVFVIFFTCECVL. The Cytoplasmic segment spans residues 1570 to 1581; sequence KMFALRHYYFTI. Residues 1582-1599 form a helical membrane-spanning segment; sequence GWNIFDFVVVILSIVGMF. At 1600 to 1612 the chain is on the extracellular side; that stretch reads LADIIEKYFVSPT. The helical transmembrane segment at 1613–1629 threads the bilayer; it reads LFRVIRLARIGRILRLI. Topologically, residues 1630–1648 are cytoplasmic; it reads KGAKGIRTLLFALMMSLPA. Residues 1649–1666 form a helical membrane-spanning segment; it reads LFNIGLLLFLVMFIFSIF. Over 1667 to 1688 the chain is Extracellular; it reads GMSNFAYVKHEAGIDDMFNFET. The pore-forming intramembrane region spans 1689-1711; it reads FGNSMICLFQITTSAGWDGLLLP. Over 1712–1740 the chain is Extracellular; the sequence is ILNRPPDCSLDKEHPGSGFKGDCGNPSVG. Cys-1719 and Cys-1734 form a disulfide bridge. The helical transmembrane segment at 1741 to 1763 threads the bilayer; it reads IFFFVSYIIISFLIVVNMYIAII. At 1764 to 1978 the chain is on the cytoplasmic side; the sequence is LENFSVATEE…RQKEVRESKC (215 aa). The IQ domain maps to 1893–1922; it reads EEVSAVVLQRAYRGHLARRGFICRKMASNK. The segment at 1923-1978 is disordered; it reads LENGGTHRDKKESTPSTASLPSYDSVTKPDKEKQQRAEEGRRERAKRQKEVRESKC. Polar residues predominate over residues 1936–1947; it reads TPSTASLPSYDS. A compositionally biased stretch (basic and acidic residues) spans 1949 to 1978; sequence TKPDKEKQQRAEEGRRERAKRQKEVRESKC.

It belongs to the sodium channel (TC 1.A.1.10) family. Nav1.6/SCN8A subfamily. In terms of assembly, the voltage-sensitive sodium channel consists of an ion-conducting pore-forming alpha subunit regulated by one or more beta-1 (SCN1B), beta-2 (SCN2B), beta-3 (SCN3B) and/or beta-4 (SCN4B) subunits. Beta-1 (SCN1B) and beta-3 (SCN3B) are non-covalently associated with alpha, while beta-2 (SCN2B) and beta-4 (SCN4B) are covalently linked by disulfide bonds. Interacts with NEDD4 and NEDD4L. Interacts with FGF13. Interacts with FGF14, GBG3, GBB2 and SCN1B. Interacts with TMEM233. Interacts with the conotoxin GVIIJ. Interacts with CALM1; the interaction modulates the inactivation rate of SCN8A. In terms of processing, may be ubiquitinated by NEDD4L; which would promote its endocytosis. Post-translationally, phosphorylation at Ser-1495 by PKC in a highly conserved cytoplasmic loop slows inactivation of the sodium channel and reduces peak sodium currents. As to expression, isoform 1 is highly expressed in brain, moderately in spinal cord, and at low levels in dorsal root ganglia, nodose ganglia and superior cervical ganglia. Not detected in sciatic nerve and non-neuronal tissues. Isoform 2 is hardly detectable, if at all, in brain, expressed at low levels in spinal cord and at highest levels in dorsal root ganglia.

The protein localises to the cell membrane. Its subcellular location is the cell projection. It is found in the axon. It carries out the reaction Na(+)(in) = Na(+)(out). Functionally, pore-forming subunit of a voltage-gated sodium channel complex assuming opened or closed conformations in response to the voltage difference across membranes and through which sodium ions selectively pass along their electrochemical gradient. Contributes to neuronal excitability by regulating action potential threshold and propagation. The polypeptide is Sodium channel protein type 8 subunit alpha (Rattus norvegicus (Rat)).